Consider the following 269-residue polypeptide: 4-hydroxy-tetrahydrodipicolinate reductase (269 aa).

NAD(+)-binding positions include 11-16 (GASGRM) and glutamate 37. Arginine 38 is an NADP(+) binding site. Residues 101 to 103 (GTT) and 125 to 128 (AGNM) each bind NAD(+). Catalysis depends on histidine 158, which acts as the Proton donor/acceptor. Histidine 159 lines the (S)-2,3,4,5-tetrahydrodipicolinate pocket. Catalysis depends on lysine 162, which acts as the Proton donor. 168-169 (GT) contacts (S)-2,3,4,5-tetrahydrodipicolinate.

The protein belongs to the DapB family.

It localises to the cytoplasm. It carries out the reaction (S)-2,3,4,5-tetrahydrodipicolinate + NAD(+) + H2O = (2S,4S)-4-hydroxy-2,3,4,5-tetrahydrodipicolinate + NADH + H(+). It catalyses the reaction (S)-2,3,4,5-tetrahydrodipicolinate + NADP(+) + H2O = (2S,4S)-4-hydroxy-2,3,4,5-tetrahydrodipicolinate + NADPH + H(+). It functions in the pathway amino-acid biosynthesis; L-lysine biosynthesis via DAP pathway; (S)-tetrahydrodipicolinate from L-aspartate: step 4/4. Catalyzes the conversion of 4-hydroxy-tetrahydrodipicolinate (HTPA) to tetrahydrodipicolinate. The chain is 4-hydroxy-tetrahydrodipicolinate reductase from Cereibacter sphaeroides (strain ATCC 17023 / DSM 158 / JCM 6121 / CCUG 31486 / LMG 2827 / NBRC 12203 / NCIMB 8253 / ATH 2.4.1.) (Rhodobacter sphaeroides).